A 224-amino-acid polypeptide reads, in one-letter code: Putative O-methyltransferase MMAR_4217 (224 aa).

Positions 1–11 (MHGTDSSSDTP) are enriched in polar residues. The segment at 1 to 20 (MHGTDSSSDTPGQPAPSRAE) is disordered. Residues Val51, Glu73, 75–76 (GT), Ser81, Asp99, and Ile100 each bind S-adenosyl-L-methionine. Asp147 contributes to the substrate binding site. An S-adenosyl-L-methionine-binding site is contributed by Asp149.

It belongs to the class I-like SAM-binding methyltransferase superfamily. Cation-dependent O-methyltransferase family.

In Mycobacterium marinum (strain ATCC BAA-535 / M), this protein is Putative O-methyltransferase MMAR_4217.